Consider the following 385-residue polypeptide: MAASPVLATTSHPIGHEAAVVTDADLDRHYAVKLAGKLNDEMAWVGQQFTGEEDFVVCLSEADVAEVNAALTAFQDTGLKPGYLSPETFKLPKLGPKLRLLSQRIHEQEGFIVLRGLQPWRYRRLENTIVFTGIASYIGNRRGVQCADGPVMTHIFDYSTEVEEKEKLNDGYLGHANRTSYLPFHTDDGHIISLYCLQAADIGGRTLLASSHAIYNHLLETRPDVIETLKEEWIWDSFIPEKPSFIRPLLLEQDGKLICNYRIRPFLGTPGYPRNAALGPLPAHQEEALNTVAEIAEKLSLKFEFKTGDIQFLNNLSILHAREEFHCAKGDTTRRHLLRLVQMDDELAWRLPPGLSKDMDKMFQHDLEEEKFIWSPEPLPYVIGQ.

It functions in the pathway mycotoxin biosynthesis. Taurine hydroxylase-like protein; part of the satratoxin SC3 cluster involved in the biosynthesis of satratoxins, trichothecene mycotoxins that are associated with human food poisonings. Satratoxins are suggested to be made by products of multiple gene clusters (SC1, SC2 and SC3) that encode 21 proteins in all, including polyketide synthases, acetyltransferases, and other enzymes expected to modify the trichothecene skeleton. SC1 encodes 10 proteins, SAT1 to SAT10. The largest are SAT8, which encodes a putative polyketide synthase (PKS) with a conventional non-reducing architecture, and SAT10, a putative protein containing four ankyrin repeats and thus may be involved in protein scaffolding. The putative short-chain reductase SAT3 may assist the PKS in some capacity. SAT6 contains a secretory lipase domain and acts probably as a trichothecene esterase. SAT5 encodes a putative acetyltransferase, and so, with SAT6, may affect endogenous protection from toxicity. The probable transcription factor SAT9 may regulate the expression of the SC1 cluster. SC2 encodes proteins SAT11 to SAT16, the largest of which encodes the putative reducing PKS SAT13. SAT11 is a cytochrome P450 monooxygenase, while SAT14 and SAT16 are probable acetyltransferases. The SC2 cluster may be regulated by the transcription factor SAT15. SC3 is a small cluster that encodes 5 proteins, SAT17 to SAT21. SAT21 is a putative MFS-type transporter which may have a role in exporting secondary metabolites. The four other proteins putatively encoded in SC3 include the taurine hydroxylase-like protein SAT17, the O-methyltransferase SAT18, the acetyltransferase SAT19, and the Cys6-type zinc finger SAT20, the latter being probably involved in regulation of SC3 expression. The polypeptide is Taurine hydroxylase-like protein SAT17 (Stachybotrys chartarum (strain CBS 109288 / IBT 7711) (Toxic black mold)).